We begin with the raw amino-acid sequence, 367 residues long: S-adenosylmethionine:tRNA ribosyltransferase-isomerase (367 aa).

Positions 150–182 (RHGEEEESSDEAISSQNPEIATESKRTPSNDDK) are disordered. Residues 171–182 (TESKRTPSNDDK) are compositionally biased toward basic and acidic residues.

Belongs to the QueA family. In terms of assembly, monomer.

The protein resides in the cytoplasm. It carries out the reaction 7-aminomethyl-7-carbaguanosine(34) in tRNA + S-adenosyl-L-methionine = epoxyqueuosine(34) in tRNA + adenine + L-methionine + 2 H(+). It participates in tRNA modification; tRNA-queuosine biosynthesis. Its function is as follows. Transfers and isomerizes the ribose moiety from AdoMet to the 7-aminomethyl group of 7-deazaguanine (preQ1-tRNA) to give epoxyqueuosine (oQ-tRNA). The chain is S-adenosylmethionine:tRNA ribosyltransferase-isomerase from Rickettsia felis (strain ATCC VR-1525 / URRWXCal2) (Rickettsia azadi).